Here is a 139-residue protein sequence, read N- to C-terminus: ATP synthase epsilon chain, chloroplastic (139 aa).

The protein belongs to the ATPase epsilon chain family. As to quaternary structure, F-type ATPases have 2 components, CF(1) - the catalytic core - and CF(0) - the membrane proton channel. CF(1) has five subunits: alpha(3), beta(3), gamma(1), delta(1), epsilon(1). CF(0) has three main subunits: a, b and c.

The protein resides in the plastid. It is found in the chloroplast thylakoid membrane. Produces ATP from ADP in the presence of a proton gradient across the membrane. The chain is ATP synthase epsilon chain, chloroplastic from Welwitschia mirabilis (Tree tumbo).